A 160-amino-acid polypeptide reads, in one-letter code: Eosinophil cationic protein (160 aa).

Residues 1–27 form the signal peptide; sequence MVPKLFTSQICLLLLLGLMGVEGSLHA. The required for nearly all of the bactericidal activity; partially involved in LPS-binding and bacterial membrane depolarization stretch occupies residues 28–72; the sequence is RPPQFTRAQWFAIQHISLNPPRCTIAMRAINNYRWRCKNQNTFLR. The active-site Proton acceptor is the H42. Intrachain disulfides connect C50/C110, C64/C123, C82/C138, and C89/C98. Y60 carries the 3'-nitrotyrosine modification. Residue 65–69 participates in substrate binding; that stretch reads KNQNT. N-linked (GlcNAc...) asparagine glycans are attached at residues N84, N92, and N119. H155 acts as the Proton donor in catalysis.

This sequence belongs to the pancreatic ribonuclease family. Interacts with bacterial lipopolysaccharide (LPS) and lipoteichoic acid (LTA). In vitro interacts with and insert into lipid bilayers composed of dioleoyl phosphatidylcholine and dioleoyl phosphatidylglycerol. In vitro, tends to form amyloid-like aggregates at pH 3, but not at pH 5, nor 7.

Its subcellular location is the secreted. Its function is as follows. Cytotoxin and helminthotoxin with low-efficiency ribonuclease activity. Possesses a wide variety of biological activities. Exhibits antibacterial activity, including cytoplasmic membrane depolarization of preferentially Gram-negative, but also Gram-positive strains. Promotes E.coli outer membrane detachment, alteration of the overall cell shape and partial loss of cell content. In Homo sapiens (Human), this protein is Eosinophil cationic protein (RNASE3).